The chain runs to 92 residues: Large ribosomal subunit protein eL37 (92 aa).

Positions 19, 22, 34, and 37 each coordinate Zn(2+). The segment at 19–37 (CRRCGRRSYHIQKSTCANC) adopts a C4-type zinc-finger fold. The disordered stretch occupies residues 50 to 92 (SEKAKRRKTTGSGRTAHLRDVHRRFKNGFQVGTPKGARGPENH).

Belongs to the eukaryotic ribosomal protein eL37 family. It depends on Zn(2+) as a cofactor.

Functionally, binds to the 23S rRNA. This Emericella nidulans (strain FGSC A4 / ATCC 38163 / CBS 112.46 / NRRL 194 / M139) (Aspergillus nidulans) protein is Large ribosomal subunit protein eL37 (rpl37).